A 485-amino-acid polypeptide reads, in one-letter code: NADH-quinone oxidoreductase subunit N (485 aa).

14 helical membrane passes run 8–28 (LIAL…MLSI), 35–55 (FLNA…LWFV), 71–91 (GFAM…CTFA), 105–125 (FYLL…ANHL), 127–147 (SLFL…GYAF), 159–179 (YTIL…LVYA), 203–223 (LLAG…LVPF), 235–255 (PAPV…GVVM), 271–291 (VVLA…ALSQ), 297–317 (LLGY…IALQ), 326–346 (VGVY…VVSL), 373–393 (AAVM…LGFI), 408–430 (WWLV…RVAV), and 455–475 (IVVL…QPLI).

This sequence belongs to the complex I subunit 2 family. NDH-1 is composed of 13 different subunits. Subunits NuoA, H, J, K, L, M, N constitute the membrane sector of the complex.

Its subcellular location is the cell inner membrane. The catalysed reaction is a quinone + NADH + 5 H(+)(in) = a quinol + NAD(+) + 4 H(+)(out). NDH-1 shuttles electrons from NADH, via FMN and iron-sulfur (Fe-S) centers, to quinones in the respiratory chain. The immediate electron acceptor for the enzyme in this species is believed to be ubiquinone. Couples the redox reaction to proton translocation (for every two electrons transferred, four hydrogen ions are translocated across the cytoplasmic membrane), and thus conserves the redox energy in a proton gradient. The polypeptide is NADH-quinone oxidoreductase subunit N (Shigella sonnei (strain Ss046)).